Here is a 539-residue protein sequence, read N- to C-terminus: Phosphoenolpyruvate carboxykinase (ATP) (539 aa).

Residues Arg-61, Tyr-195, and Lys-201 each contribute to the substrate site. ATP contacts are provided by residues Lys-201, His-220, and Gly-238–Thr-246. 2 residues coordinate Mn(2+): Lys-201 and His-220. Asp-259 serves as a coordination point for Mn(2+). Residues Glu-287, Arg-325, and Thr-450 each coordinate ATP. Position 325 (Arg-325) interacts with substrate.

It belongs to the phosphoenolpyruvate carboxykinase (ATP) family. The cofactor is Mn(2+).

It is found in the cytoplasm. It catalyses the reaction oxaloacetate + ATP = phosphoenolpyruvate + ADP + CO2. It participates in carbohydrate biosynthesis; gluconeogenesis. In terms of biological role, involved in the gluconeogenesis. Catalyzes the conversion of oxaloacetate (OAA) to phosphoenolpyruvate (PEP) through direct phosphoryl transfer between the nucleoside triphosphate and OAA. This Methylobacterium radiotolerans (strain ATCC 27329 / DSM 1819 / JCM 2831 / NBRC 15690 / NCIMB 10815 / 0-1) protein is Phosphoenolpyruvate carboxykinase (ATP).